A 143-amino-acid chain; its full sequence is MNTVQILVVILITTALSFLVFQLWYYAENYEYILRYNDTYSNLQFARSANINFDDLTVFDPNDNVFNVEEKWRCASTNNNIFYAVSTFGFLSTESTGINLTYTNSRDCIIDLFSRIIKIVYDPCTVETSNDCRLLRLLMANTS.

A helical; Signal-anchor for type II membrane protein transmembrane segment spans residues 1 to 21 (MNTVQILVVILITTALSFLVF). At 22–143 (QLWYYAENYE…LLRLLMANTS (122 aa)) the chain is on the virion surface side.

Belongs to the poxviridae A28 protein family. Post-translationally, contains two intramolecular disulfide bonds. They are created by the viral disulfide bond formation pathway, a poxvirus-specific pathway that operates on the cytoplasmic side of the MV membranes.

Its subcellular location is the virion membrane. Envelope protein required for virus entry into host cell and for cell-cell fusion (syncytium formation). This chain is Envelope protein A28 homolog, found in Amsacta (AmEPV).